The chain runs to 467 residues: tRNA-2-methylthio-N(6)-dimethylallyladenosine synthase (467 aa).

The interval 1–20 is disordered; sequence MSDDTTQIEPAMAQETSPRA. The MTTase N-terminal domain occupies 23–143; it reads RKVFVKTYGC…LPNALARVRG (121 aa). Residues Cys32, Cys68, Cys106, Cys184, Cys188, and Cys191 each contribute to the [4Fe-4S] cluster site. In terms of domain architecture, Radical SAM core spans 170 to 402; it reads RKRGVSAFLT…QALLSAQQYA (233 aa). The 63-residue stretch at 405 to 467 folds into the TRAM domain; the sequence is DSMIGRKMDV…TNSLIAQKLA (63 aa).

It belongs to the methylthiotransferase family. MiaB subfamily. Monomer. [4Fe-4S] cluster is required as a cofactor.

The protein resides in the cytoplasm. It carries out the reaction N(6)-dimethylallyladenosine(37) in tRNA + (sulfur carrier)-SH + AH2 + 2 S-adenosyl-L-methionine = 2-methylsulfanyl-N(6)-dimethylallyladenosine(37) in tRNA + (sulfur carrier)-H + 5'-deoxyadenosine + L-methionine + A + S-adenosyl-L-homocysteine + 2 H(+). Catalyzes the methylthiolation of N6-(dimethylallyl)adenosine (i(6)A), leading to the formation of 2-methylthio-N6-(dimethylallyl)adenosine (ms(2)i(6)A) at position 37 in tRNAs that read codons beginning with uridine. In Brucella canis (strain ATCC 23365 / NCTC 10854 / RM-666), this protein is tRNA-2-methylthio-N(6)-dimethylallyladenosine synthase.